Consider the following 235-residue polypeptide: Ribonuclease PH (235 aa).

Phosphate-binding positions include arginine 86 and 124–126; that span reads GTR.

It belongs to the RNase PH family. In terms of assembly, homohexameric ring arranged as a trimer of dimers.

It carries out the reaction tRNA(n+1) + phosphate = tRNA(n) + a ribonucleoside 5'-diphosphate. Functionally, phosphorolytic 3'-5' exoribonuclease that plays an important role in tRNA 3'-end maturation. Removes nucleotide residues following the 3'-CCA terminus of tRNAs; can also add nucleotides to the ends of RNA molecules by using nucleoside diphosphates as substrates, but this may not be physiologically important. Probably plays a role in initiation of 16S rRNA degradation (leading to ribosome degradation) during starvation. This is Ribonuclease PH from Francisella tularensis subsp. novicida (strain U112).